The sequence spans 448 residues: Probable glycine dehydrogenase (decarboxylating) subunit 1 (448 aa).

Belongs to the GcvP family. N-terminal subunit subfamily. In terms of assembly, the glycine cleavage system is composed of four proteins: P, T, L and H. In this organism, the P 'protein' is a heterodimer of two subunits.

It catalyses the reaction N(6)-[(R)-lipoyl]-L-lysyl-[glycine-cleavage complex H protein] + glycine + H(+) = N(6)-[(R)-S(8)-aminomethyldihydrolipoyl]-L-lysyl-[glycine-cleavage complex H protein] + CO2. The glycine cleavage system catalyzes the degradation of glycine. The P protein binds the alpha-amino group of glycine through its pyridoxal phosphate cofactor; CO(2) is released and the remaining methylamine moiety is then transferred to the lipoamide cofactor of the H protein. This Rhodospirillum rubrum (strain ATCC 11170 / ATH 1.1.1 / DSM 467 / LMG 4362 / NCIMB 8255 / S1) protein is Probable glycine dehydrogenase (decarboxylating) subunit 1.